The sequence spans 392 residues: Phosphoglycerate kinase (392 aa).

Substrate contacts are provided by residues 21–23 (DLN), Arg-36, 59–62 (HLGR), Arg-113, and Arg-146. ATP is bound by residues Lys-197, Glu-319, and 345–348 (GGDT).

This sequence belongs to the phosphoglycerate kinase family. In terms of assembly, monomer.

Its subcellular location is the cytoplasm. The catalysed reaction is (2R)-3-phosphoglycerate + ATP = (2R)-3-phospho-glyceroyl phosphate + ADP. Its pathway is carbohydrate degradation; glycolysis; pyruvate from D-glyceraldehyde 3-phosphate: step 2/5. In Alkalilimnicola ehrlichii (strain ATCC BAA-1101 / DSM 17681 / MLHE-1), this protein is Phosphoglycerate kinase.